The sequence spans 142 residues: HTH-type transcriptional regulator MntR (142 aa).

Residues 1-63 (MTTPSMEDYI…YEKYRGLVLT (63 aa)) enclose the HTH dtxR-type domain. Residues D8, E11, H77, E99, E102, and H103 each contribute to the Cd(2+) site. 6 residues coordinate Mn(2+): D8, E11, H77, E99, E102, and H103.

The protein belongs to the DtxR/MntR family. Homodimer.

Its subcellular location is the cytoplasm. Its activity is regulated as follows. DNA binding is strongly activated by Mn(2+) and Cd(2+), but it is poorly activated by non-cognate metal cations, including Co(2+), Fe(2+), Ni(2+), Ca(2+) and Zn(2+). In the strict absence of divalent transition metal ions, MntR has a low affinity for DNA. Functionally, central regulator of manganese homeostasis that regulates the expression of both manganese uptake and efflux systems. In the presence of high levels of manganese, it mediates repression of the manganese uptake systems MntH and MntABCD and activation of the efflux systems MneP and MneS. Binds with high affinity to the regulatory regions of its target genes. The manganese concentration required for activation of efflux is higher than that for repression of uptake. This chain is HTH-type transcriptional regulator MntR, found in Bacillus subtilis (strain 168).